Consider the following 332-residue polypeptide: Probable endo-beta-1,4-glucanase B (332 aa).

The first 18 residues, 1–18 (MKFQSTLLLAAAAGSALA), serve as a signal peptide directing secretion. Asparagine 38 and asparagine 100 each carry an N-linked (GlcNAc...) asparagine glycan. The active-site Proton donor is the glutamate 160. The N-linked (GlcNAc...) asparagine glycan is linked to asparagine 212. Glutamate 267 acts as the Nucleophile in catalysis. An N-linked (GlcNAc...) asparagine glycan is attached at asparagine 289.

Belongs to the glycosyl hydrolase 5 (cellulase A) family.

It is found in the secreted. The enzyme catalyses Endohydrolysis of (1-&gt;4)-beta-D-glucosidic linkages in cellulose, lichenin and cereal beta-D-glucans.. Has endoglucanase activity on substrates containing beta-1,4 glycosidic bonds, like in carboxymethylcellulose (CMC), hydroxyethylcellulose (HEC) and beta-glucan. Involved in the degradation of complex natural cellulosic substrates. This Aspergillus kawachii (strain NBRC 4308) (White koji mold) protein is Probable endo-beta-1,4-glucanase B (eglB).